We begin with the raw amino-acid sequence, 832 residues long: Protein P (832 aa).

The tract at residues 1–177 (MPLSYQHFRK…FCGSPYSWEQ (177 aa)) is terminal protein domain (TP). Positions 178–335 (ELQHGAESFH…YCLSHLVSLL (158 aa)) are spacer. A polymerase/reverse transcriptase domain (RT) region spans residues 336–679 (DDWGPCTEHG…YSTLYPVARQ (344 aa)). Positions 346–589 (EHHIRIPRTP…YSLHFMGYVI (244 aa)) constitute a Reverse transcriptase domain. 3 residues coordinate Mg(2+): Asp-418, Asp-540, and Asp-541.

The protein belongs to the hepadnaviridae P protein family.

The catalysed reaction is DNA(n) + a 2'-deoxyribonucleoside 5'-triphosphate = DNA(n+1) + diphosphate. It catalyses the reaction Endonucleolytic cleavage to 5'-phosphomonoester.. Its activity is regulated as follows. Activated by host HSP70 and HSP40 in vitro to be able to bind the epsilon loop of the pgRNA. Because deletion of the RNase H region renders the protein partly chaperone-independent, the chaperones may be needed indirectly to relieve occlusion of the RNA-binding site by this domain. Inhibited by several reverse-transcriptase inhibitors: Lamivudine, Adefovir and Entecavir. Its function is as follows. Multifunctional enzyme that converts the viral RNA genome into dsDNA in viral cytoplasmic capsids. This enzyme displays a DNA polymerase activity that can copy either DNA or RNA templates, and a ribonuclease H (RNase H) activity that cleaves the RNA strand of RNA-DNA heteroduplexes in a partially processive 3'- to 5'-endonucleasic mode. Neo-synthesized pregenomic RNA (pgRNA) are encapsidated together with the P protein, and reverse-transcribed inside the nucleocapsid. Initiation of reverse-transcription occurs first by binding the epsilon loop on the pgRNA genome, and is initiated by protein priming, thereby the 5'-end of (-)DNA is covalently linked to P protein. Partial (+)DNA is synthesized from the (-)DNA template and generates the relaxed circular DNA (RC-DNA) genome. After budding and infection, the RC-DNA migrates in the nucleus, and is converted into a plasmid-like covalently closed circular DNA (cccDNA). The activity of P protein does not seem to be necessary for cccDNA generation, and is presumably released from (+)DNA by host nuclear DNA repair machinery. The polypeptide is Protein P (Pan troglodytes (Chimpanzee)).